A 167-amino-acid chain; its full sequence is Phospholipase A and acyltransferase 1 (167 aa).

Residues 1-138 (MAVNDCFSLT…GEGVSEQANR (138 aa)) lie on the Cytoplasmic side of the membrane. Residues 20-135 (LIEVFRPCYQ…LRYGEGVSEQ (116 aa)) form the LRAT domain. Residue His-30 is part of the active site. The active-site Acyl-thioester intermediate is Cys-119. A helical membrane pass occupies residues 139–159 (AIGTIGLVAAGIDIFTFLGLF). Topologically, residues 160-167 (PKRQGAKS) are lumenal.

It belongs to the H-rev107 family.

It is found in the membrane. Its subcellular location is the cytoplasm. It localises to the nucleus. The catalysed reaction is a 1,2-diacyl-sn-glycero-3-phosphocholine + H2O = a 1-acyl-sn-glycero-3-phosphocholine + a fatty acid + H(+). It carries out the reaction a 1,2-diacyl-sn-glycero-3-phosphocholine + H2O = a 2-acyl-sn-glycero-3-phosphocholine + a fatty acid + H(+). The enzyme catalyses 1,2-dihexadecanoyl-sn-glycero-3-phosphocholine + H2O = 2-hexadecanoyl-sn-glycero-3-phosphocholine + hexadecanoate + H(+). It catalyses the reaction 1,2-dihexadecanoyl-sn-glycero-3-phosphocholine + H2O = 1-hexadecanoyl-sn-glycero-3-phosphocholine + hexadecanoate + H(+). The catalysed reaction is 1-hexadecanoyl-2-(5Z,8Z,11Z,14Z-eicosatetraenoyl)-sn-glycero-3-phosphoethanolamine + H2O = 2-(5Z,8Z,11Z,14Z)-eicosatetraenoyl-sn-glycero-3-phosphoethanolamine + hexadecanoate + H(+). It carries out the reaction 1-hexadecanoyl-2-(5Z,8Z,11Z,14Z-eicosatetraenoyl)-sn-glycero-3-phosphoethanolamine + H2O = 1-hexadecanoyl-sn-glycero-3-phosphoethanolamine + (5Z,8Z,11Z,14Z)-eicosatetraenoate + H(+). The enzyme catalyses 1,2-di-(9Z-octadecenoyl)-sn-glycero-3-phosphoethanolamine + 1,2-dihexadecanoyl-sn-glycero-3-phosphocholine = hexadecanoyl-sn-glycero-3-phosphocholine + N-hexadecanoyl-1,2-di-(9Z-octadecenoyl)-sn-glycero-3-phosphoethanolamine + H(+). It catalyses the reaction 1,2-dihexadecanoyl-sn-glycero-3-phosphocholine + a 2-acyl-sn-glycero-3-phosphocholine = a 1-hexadecanoyl-2-acyl-sn-glycero-3-phosphocholine + 2-hexadecanoyl-sn-glycero-3-phosphocholine. Functionally, exhibits both phospholipase A1/2 and acyltransferase activities. Shows phospholipase A1 (PLA1) and A2 (PLA2) activity, catalyzing the calcium-independent release of fatty acids from the sn-1 or sn-2 position of glycerophospholipids. Shows O-acyltransferase activity, catalyzing the transfer of a fatty acyl group from glycerophospholipid to the hydroxyl group of lysophospholipid. The protein is Phospholipase A and acyltransferase 1 of Rattus norvegicus (Rat).